The primary structure comprises 100 residues: Nucleoid-associated protein Cagg_3200 (100 aa).

The protein belongs to the YbaB/EbfC family. As to quaternary structure, homodimer.

It is found in the cytoplasm. It localises to the nucleoid. Binds to DNA and alters its conformation. May be involved in regulation of gene expression, nucleoid organization and DNA protection. The protein is Nucleoid-associated protein Cagg_3200 of Chloroflexus aggregans (strain MD-66 / DSM 9485).